Here is a 181-residue protein sequence, read N- to C-terminus: Small ribosomal subunit protein uS4 (181 aa).

The 70-residue stretch at 108-177 (RRLQTMVYRQ…EGHPEIERIN (70 aa)) folds into the S4 RNA-binding domain. Positions 161–181 (GTSPLTSEGHPEIERINKKRR) are disordered. Over residues 169-181 (GHPEIERINKKRR) the composition is skewed to basic and acidic residues.

It belongs to the universal ribosomal protein uS4 family. In terms of assembly, part of the 30S ribosomal subunit. Contacts protein S5. The interaction surface between S4 and S5 is involved in control of translational fidelity.

Its function is as follows. One of the primary rRNA binding proteins, it binds directly to 16S rRNA where it nucleates assembly of the body of the 30S subunit. In terms of biological role, with S5 and S12 plays an important role in translational accuracy. In Methanosphaerula palustris (strain ATCC BAA-1556 / DSM 19958 / E1-9c), this protein is Small ribosomal subunit protein uS4.